We begin with the raw amino-acid sequence, 401 residues long: Homeobox protein engrailed-1 (401 aa).

Disordered regions lie at residues 1 to 102 (MEEQ…PAAQ), 138 to 167 (GGGA…HSLG), 229 to 253 (SKPS…AKFP), and 293 to 315 (RPSS…DKRP). The span at 13–48 (DSGLGAVAAAAPSGLSLSLSPGASGSSGSDGDSVPV) shows a compositional bias: low complexity. 2 stretches are compositionally biased toward pro residues: residues 49–64 (SPQP…PCLP) and 73–88 (PPHP…PPPQ). Residues 89–102 (HLAAPAHQPQPAAQ) show a composition bias toward low complexity. 2 stretches are compositionally biased toward gly residues: residues 138 to 147 (GGGAAAGGGS) and 234 to 243 (SGGGSGGNAG). Positions 312 to 371 (DKRPRTAFTAEQLQRLKAEFQANRYITEQRRQTLAQELSLNESQIKIWFQNKRAKIKKAT) form a DNA-binding region, homeobox.

The protein belongs to the engrailed homeobox family.

Its subcellular location is the nucleus. Its function is as follows. Required for proper formation of the apical ectodermal ridge and correct dorsal-ventral patterning in the limb. The protein is Homeobox protein engrailed-1 (En1) of Mus musculus (Mouse).